The sequence spans 399 residues: uncharacterized protein (399 aa).

Helical transmembrane passes span 6-26, 27-47, 60-80, 111-131, 147-167, 173-193, 195-215, 220-240, 328-348, and 362-382; these read HLTF…LIIP, KGYN…FIPL, LIFS…INKD, ILYA…FQKF, MGNI…HFFI, STLF…LSGA, GGWI…KEFI, IITL…SPKF, GLVG…YFIK, and ILGI…SFLA.

It localises to the cell membrane. This is an uncharacterized protein from Haemophilus influenzae (strain ATCC 51907 / DSM 11121 / KW20 / Rd).